The sequence spans 271 residues: Phosphatidylinositol transfer protein alpha isoform (271 aa).

6 residues coordinate a 1,2-diacyl-sn-glycero-3-phospho-(1D-myo-inositol): threonine 59, lysine 61, glutamate 86, asparagine 90, threonine 97, and lysine 195. N6-acetyllysine is present on lysine 216. The segment covering 251–264 (TKRQLDEMRQKDPV) has biased composition (basic and acidic residues). Residues 251–271 (TKRQLDEMRQKDPVKGMTADD) form a disordered region.

It belongs to the PtdIns transfer protein family. PI transfer class I subfamily. In terms of processing, phosphorylated by PKC in a calcium and phosphatidylserine-dependent manner.

Its subcellular location is the cytoplasm. It is found in the nucleus. It carries out the reaction a 1,2-diacyl-sn-glycero-3-phosphocholine(in) = a 1,2-diacyl-sn-glycero-3-phosphocholine(out). The catalysed reaction is a 1,2-diacyl-sn-glycero-3-phospho-(1D-myo-inositol)(in) = a 1,2-diacyl-sn-glycero-3-phospho-(1D-myo-inositol)(out). In terms of biological role, catalyzes the transfer of phosphatidylinositol (PI) and phosphatidylcholine (PC) between membranes. Shows a preference for PI and PC containing shorter saturated or monosaturated acyl chains at the sn-1 and sn-2 positions. Preference order for PC is C16:1 &gt; C16:0 &gt; C18:1 &gt; C18:0 &gt; C20:4 and for PI is C16:1 &gt; C16:0 &gt; C18:1 &gt; C18:0 &gt; C20:4 &gt; C20:3. In Mus musculus (Mouse), this protein is Phosphatidylinositol transfer protein alpha isoform (Pitpna).